A 485-amino-acid chain; its full sequence is Glutamyl-tRNA(Gln) amidotransferase subunit A (485 aa).

Residues Lys79 and Ser154 each act as charge relay system in the active site. The Acyl-ester intermediate role is filled by Ser178.

The protein belongs to the amidase family. GatA subfamily. As to quaternary structure, heterotrimer of A, B and C subunits.

It carries out the reaction L-glutamyl-tRNA(Gln) + L-glutamine + ATP + H2O = L-glutaminyl-tRNA(Gln) + L-glutamate + ADP + phosphate + H(+). Its function is as follows. Allows the formation of correctly charged Gln-tRNA(Gln) through the transamidation of misacylated Glu-tRNA(Gln) in organisms which lack glutaminyl-tRNA synthetase. The reaction takes place in the presence of glutamine and ATP through an activated gamma-phospho-Glu-tRNA(Gln). The chain is Glutamyl-tRNA(Gln) amidotransferase subunit A from Staphylococcus epidermidis (strain ATCC 35984 / DSM 28319 / BCRC 17069 / CCUG 31568 / BM 3577 / RP62A).